A 315-amino-acid polypeptide reads, in one-letter code: Homoserine kinase (315 aa).

ATP is bound at residue Pro97–Thr107.

The protein belongs to the GHMP kinase family. Homoserine kinase subfamily.

It is found in the cytoplasm. It catalyses the reaction L-homoserine + ATP = O-phospho-L-homoserine + ADP + H(+). The protein operates within amino-acid biosynthesis; L-threonine biosynthesis; L-threonine from L-aspartate: step 4/5. Its function is as follows. Catalyzes the ATP-dependent phosphorylation of L-homoserine to L-homoserine phosphate. The protein is Homoserine kinase of Prochlorococcus marinus (strain SARG / CCMP1375 / SS120).